The primary structure comprises 192 residues: Erythropoietin (192 aa).

The N-terminal stretch at 1–27 (MGVHECPAWLWLLLSLVSLPLGLPVPG) is a signal peptide. 2 cysteine pairs are disulfide-bonded: Cys-34-Cys-187 and Cys-56-Cys-60. Asn-51 carries an N-linked (GlcNAc...) asparagine glycan. Residues Asn-65 and Asn-110 are each glycosylated (N-linked (GlcNAc...) asparagine). Residue Ser-152 is glycosylated (O-linked (GalNAc...) serine).

Belongs to the EPO/TPO family. As to expression, produced by kidney or liver of adult mammals and by liver of fetal or neonatal mammals.

Its subcellular location is the secreted. In terms of biological role, hormone involved in the regulation of erythrocyte proliferation and differentiation and the maintenance of a physiological level of circulating erythrocyte mass. Binds to EPOR leading to EPOR dimerization and JAK2 activation thereby activating specific downstream effectors, including STAT1 and STAT3. This Macaca fascicularis (Crab-eating macaque) protein is Erythropoietin (EPO).